Consider the following 233-residue polypeptide: Transcriptional regulatory protein PrrA (233 aa).

In terms of domain architecture, Response regulatory spans 9–123; it reads RVLVVDDDSD…ELVARVKALL (115 aa). A 4-aspartylphosphate modification is found at Asp58. Positions 134–232 form a DNA-binding region, ompR/PhoB-type; sequence SETIAVGPLE…VRGVGFVLRM (99 aa).

In terms of processing, phosphorylated by PrrB at Asp-58.

The protein resides in the cytoplasm. In terms of biological role, member of the two-component regulatory system PrrB/PrrA that is involved specifically in early intracellular multiplication of Mycobacterium and is essential for its viability. Upon phosphorylation by PrrB, functions as a transcription regulator by direct binding to promoter regions of target genes to positively regulate their expression. Autoregulates its own expression. In Mycobacterium leprae (strain TN), this protein is Transcriptional regulatory protein PrrA (prrA).